A 337-amino-acid polypeptide reads, in one-letter code: Nodulation protein D 2 (337 aa).

The HTH lysR-type domain occupies Leu-6 to Thr-63. A DNA-binding region (H-T-H motif) is located at residues Leu-23–Ala-42.

The protein belongs to the LysR transcriptional regulatory family.

In terms of biological role, nodD regulates the expression of the nodABCFE genes which encode other nodulation proteins. NodD is also a negative regulator of its own expression. Binds flavonoids as inducers. The protein is Nodulation protein D 2 (nodD2) of Bradyrhizobium sp. (strain NC92).